We begin with the raw amino-acid sequence, 399 residues long: Telomeric repeat-binding factor 2-interacting protein 1 (399 aa).

At Ala-2 the chain carries N-acetylalanine. Phosphoserine occurs at positions 36 and 43. In terms of domain architecture, BRCT spans Phe-78–Leu-101. The interval Ala-104 to Gly-132 is disordered. The span at Glu-112 to Pro-125 shows a compositional bias: low complexity. A Glycyl lysine isopeptide (Lys-Gly) (interchain with G-Cter in SUMO2) cross-link involves residue Lys-114. Residues Gln-128–Leu-188 enclose the Myb-like domain. Phosphoserine occurs at positions 154 and 156. A Glycyl lysine isopeptide (Lys-Gly) (interchain with G-Cter in SUMO2) cross-link involves residue Lys-194. Disordered regions lie at residues Leu-196–Gln-244 and Val-264–Val-311. Phosphoserine is present on residues Ser-203 and Ser-206. Residues Lys-208, Lys-212, and Lys-240 each participate in a glycyl lysine isopeptide (Lys-Gly) (interchain with G-Cter in SUMO2) cross-link. Positions Cys-280–Glu-304 are enriched in acidic residues. Residue Lys-372 forms a Glycyl lysine isopeptide (Lys-Gly) (interchain with G-Cter in SUMO2) linkage. The short motif at Lys-383–Lys-399 is the Nuclear localization signal element.

Belongs to the RAP1 family. As to quaternary structure, associates with the I-kappa-B-kinase (IKK) core complex, composed of CHUK, IKBKB and IKBKG. Homodimer. Component of the shelterin complex (telosome) composed of TERF1, TERF2, TINF2, TERF2IP ACD and POT1. Interacts with TERF2; the interaction is direct. Does not interact with TERF1. Interacts with SLX4/BTBD12. Ubiquitous. Highly expressed.

Its subcellular location is the nucleus. It localises to the cytoplasm. The protein resides in the chromosome. It is found in the telomere. Acts both as a regulator of telomere function and as a transcription regulator. Involved in the regulation of telomere length and protection as a component of the shelterin complex (telosome). In contrast to other components of the shelterin complex, it is dispensible for telomere capping and does not participate in the protection of telomeres against non-homologous end-joining (NHEJ)-mediated repair. Instead, it is required to negatively regulate telomere recombination and is essential for repressing homology-directed repair (HDR), which can affect telomere length. Does not bind DNA directly: recruited to telomeric double-stranded 5'-TTAGGG-3' repeats via its interaction with TERF2. Independently of its function in telomeres, also acts as a transcription regulator: recruited to extratelomeric 5'-TTAGGG-3' sites via its association with TERF2 or other factors, and regulates gene expression. When cytoplasmic, associates with the I-kappa-B-kinase (IKK) complex and acts as a regulator of the NF-kappa-B signaling by promoting IKK-mediated phosphorylation of RELA/p65, leading to activate expression of NF-kappa-B target genes. This Homo sapiens (Human) protein is Telomeric repeat-binding factor 2-interacting protein 1 (TERF2IP).